The sequence spans 240 residues: uncharacterized protein (240 aa).

Transmembrane regions (helical) follow at residues 16–36 (AVFF…YFIP) and 67–87 (FITA…VIAM).

It localises to the cell membrane. This is an uncharacterized protein from Bacillus subtilis (strain 168).